The sequence spans 543 residues: CTP synthase (543 aa).

Residues 1–265 (MTRYIFVTGG…DDFVVERFGL (265 aa)) form an amidoligase domain region. S13 serves as a coordination point for CTP. Residue S13 coordinates UTP. Residues 14–19 (SLGKGI) and D71 contribute to the ATP site. The Mg(2+) site is built by D71 and E139. Residues 146-148 (DIE), 186-191 (KTKPTQ), and K222 contribute to the CTP site. UTP is bound by residues 186–191 (KTKPTQ) and K222. In terms of domain architecture, Glutamine amidotransferase type-1 spans 290–541 (TIAMVGKYME…VKAALAQHQK (252 aa)). G351 contacts L-glutamine. The active-site Nucleophile; for glutamine hydrolysis is the C378. Residues 379 to 382 (LGMQ), E402, and R469 each bind L-glutamine. Active-site residues include H514 and E516.

The protein belongs to the CTP synthase family. As to quaternary structure, homotetramer.

The catalysed reaction is UTP + L-glutamine + ATP + H2O = CTP + L-glutamate + ADP + phosphate + 2 H(+). It catalyses the reaction L-glutamine + H2O = L-glutamate + NH4(+). It carries out the reaction UTP + NH4(+) + ATP = CTP + ADP + phosphate + 2 H(+). Its pathway is pyrimidine metabolism; CTP biosynthesis via de novo pathway; CTP from UDP: step 2/2. Its activity is regulated as follows. Allosterically activated by GTP, when glutamine is the substrate; GTP has no effect on the reaction when ammonia is the substrate. The allosteric effector GTP functions by stabilizing the protein conformation that binds the tetrahedral intermediate(s) formed during glutamine hydrolysis. Inhibited by the product CTP, via allosteric rather than competitive inhibition. Its function is as follows. Catalyzes the ATP-dependent amination of UTP to CTP with either L-glutamine or ammonia as the source of nitrogen. Regulates intracellular CTP levels through interactions with the four ribonucleotide triphosphates. This chain is CTP synthase, found in Pseudomonas syringae pv. tomato (strain ATCC BAA-871 / DC3000).